A 205-amino-acid chain; its full sequence is Pre-rRNA-processing protein TSR2 (205 aa).

The segment at 144–205 (SKRVVHIEGD…LVQPKGRRKH (62 aa)) is disordered. A compositionally biased stretch (acidic residues) spans 152–177 (GDDDEDDEDVEDYDDEDEDEEMDEVV).

The protein belongs to the TSR2 family. In terms of assembly, interacts with RPS26A.

Its subcellular location is the cytoplasm. The protein localises to the nucleus. In terms of biological role, required for 20S pre-rRNA processing. The sequence is that of Pre-rRNA-processing protein TSR2 from Saccharomyces cerevisiae (strain ATCC 204508 / S288c) (Baker's yeast).